Here is a 172-residue protein sequence, read N- to C-terminus: Adenine phosphoribosyltransferase (172 aa).

Belongs to the purine/pyrimidine phosphoribosyltransferase family. In terms of assembly, homodimer.

It localises to the cytoplasm. The catalysed reaction is AMP + diphosphate = 5-phospho-alpha-D-ribose 1-diphosphate + adenine. It participates in purine metabolism; AMP biosynthesis via salvage pathway; AMP from adenine: step 1/1. Its function is as follows. Catalyzes a salvage reaction resulting in the formation of AMP, that is energically less costly than de novo synthesis. The sequence is that of Adenine phosphoribosyltransferase from Prochlorococcus marinus (strain NATL2A).